The primary structure comprises 345 residues: UPF0324 membrane protein RB0971 (345 aa).

10 helical membrane passes run 13–32 (SLSV…AAVA), 42–61 (YGAP…HFLA), 93–115 (LLIG…TILF), 130–152 (ALLT…AAVL), 161–183 (NLIF…YPIV), 193–215 (ATGI…GFSV), 228–247 (LIRV…VLRS), 262–284 (VPGF…VPVL), 291–310 (AISR…KTSL), and 320–342 (AVAL…MYYL).

Belongs to the UPF0324 family.

The protein resides in the cell membrane. The protein is UPF0324 membrane protein RB0971 of Rhizobium meliloti (strain 1021) (Ensifer meliloti).